Consider the following 92-residue polypeptide: Small ribosomal subunit protein bS20 (92 aa).

The disordered stretch occupies residues M1 to R24.

It belongs to the bacterial ribosomal protein bS20 family.

Its function is as follows. Binds directly to 16S ribosomal RNA. This chain is Small ribosomal subunit protein bS20, found in Rhizobium etli (strain ATCC 51251 / DSM 11541 / JCM 21823 / NBRC 15573 / CFN 42).